The chain runs to 500 residues: L-aspartate semialdehyde sulfurtransferase (500 aa).

Residue cysteine 131 is the Cysteine persulfide intermediate of the active site. 2 CBS domains span residues 384 to 441 (MADF…IFDS) and 446 to 500 (MTKK…ARRY).

It belongs to the L-aspartate semialdehyde sulfurtransferase family. Forms homodimers. May form a complex with MA_1822.

It catalyses the reaction L-aspartate 4-semialdehyde + reduced 2[4Fe-4S]-[ferredoxin] + hydrogen sulfide + 3 H(+) = oxidized 2[4Fe-4S]-[ferredoxin] + L-homocysteine + H2O. It functions in the pathway amino-acid biosynthesis. Required for O-acetylhomoserine sulfhydrylase (OAHS)-independent homocysteine (Hcy) biosynthesis. Together with MA_1822, catalyzes the condensation of sulfide with aspartate semialdehyde to generate homocysteine. Likely functions through persulfide intermediate. The sequence is that of L-aspartate semialdehyde sulfurtransferase from Methanosarcina acetivorans (strain ATCC 35395 / DSM 2834 / JCM 12185 / C2A).